We begin with the raw amino-acid sequence, 124 residues long: Glutaredoxin-2 (124 aa).

A disulfide bridge connects residues Cys-13 and Cys-16.

This sequence belongs to the glutaredoxin family. Homodimer.

The protein resides in the host cytoplasm. Functionally, glutaredoxin necessary for virion morphogenesis and virus replication. Functions as a thiol-disulfide transfer protein between membrane-associated OPG128 and substrates OPG095 or OPG053. The complete pathway for formation of disulfide bonds in intracellular virion membrane proteins sequentially involves oxidation of OPG072, OPG128 and OPG088. Exhibit thioltransferase and dehydroascorbate reductase activities in vitro. This chain is Glutaredoxin-2 (OPG088), found in Mus musculus (Mouse).